Consider the following 215-residue polypeptide: Octanoyltransferase (215 aa).

One can recognise a BPL/LPL catalytic domain in the interval 31–206 (PDSQDEIWLV…QLVKHLDYAE (176 aa)). Residues 70–77 (RGGQVTYH), 137–139 (SLG), and 150–152 (GLA) each bind substrate. The active-site Acyl-thioester intermediate is the cysteine 168.

The protein belongs to the LipB family.

The protein resides in the cytoplasm. It carries out the reaction octanoyl-[ACP] + L-lysyl-[protein] = N(6)-octanoyl-L-lysyl-[protein] + holo-[ACP] + H(+). The protein operates within protein modification; protein lipoylation via endogenous pathway; protein N(6)-(lipoyl)lysine from octanoyl-[acyl-carrier-protein]: step 1/2. In terms of biological role, catalyzes the transfer of endogenously produced octanoic acid from octanoyl-acyl-carrier-protein onto the lipoyl domains of lipoate-dependent enzymes. Lipoyl-ACP can also act as a substrate although octanoyl-ACP is likely to be the physiological substrate. The chain is Octanoyltransferase from Pseudomonas putida (strain W619).